The primary structure comprises 174 residues: Adipose-secreted signaling protein (174 aa).

At alanine 2 the chain carries N-acetylalanine. The residue at position 147 (threonine 147) is a Phosphothreonine.

The protein belongs to the ADISSP family.

It localises to the secreted. In terms of biological role, adipocyte-secreted protein (adipokine) that acts as a key regulator for white adipose tissue (WAT) thermogenesis and glucose homeostasis at least in part through activation of protein kinase A (PKA). This is Adipose-secreted signaling protein from Bos taurus (Bovine).